We begin with the raw amino-acid sequence, 480 residues long: Proline--tRNA ligase (480 aa).

The protein belongs to the class-II aminoacyl-tRNA synthetase family. ProS type 3 subfamily. In terms of assembly, homodimer.

It localises to the cytoplasm. The catalysed reaction is tRNA(Pro) + L-proline + ATP = L-prolyl-tRNA(Pro) + AMP + diphosphate. Functionally, catalyzes the attachment of proline to tRNA(Pro) in a two-step reaction: proline is first activated by ATP to form Pro-AMP and then transferred to the acceptor end of tRNA(Pro). This chain is Proline--tRNA ligase, found in Chloroflexus aurantiacus (strain ATCC 29364 / DSM 637 / Y-400-fl).